The chain runs to 413 residues: Serine--tRNA ligase (413 aa).

L-serine is bound at residue 221–223 (TAE). ATP is bound at residue 252-254 (RRE). L-serine is bound at residue glutamate 275. 339–342 (EVSS) provides a ligand contact to ATP. Serine 375 contributes to the L-serine binding site.

This sequence belongs to the class-II aminoacyl-tRNA synthetase family. Type-1 seryl-tRNA synthetase subfamily. In terms of assembly, homodimer. The tRNA molecule binds across the dimer.

It localises to the cytoplasm. The catalysed reaction is tRNA(Ser) + L-serine + ATP = L-seryl-tRNA(Ser) + AMP + diphosphate + H(+). It carries out the reaction tRNA(Sec) + L-serine + ATP = L-seryl-tRNA(Sec) + AMP + diphosphate + H(+). It participates in aminoacyl-tRNA biosynthesis; selenocysteinyl-tRNA(Sec) biosynthesis; L-seryl-tRNA(Sec) from L-serine and tRNA(Sec): step 1/1. Catalyzes the attachment of serine to tRNA(Ser). Is also able to aminoacylate tRNA(Sec) with serine, to form the misacylated tRNA L-seryl-tRNA(Sec), which will be further converted into selenocysteinyl-tRNA(Sec). In Dehalococcoides mccartyi (strain ATCC BAA-2266 / KCTC 15142 / 195) (Dehalococcoides ethenogenes (strain 195)), this protein is Serine--tRNA ligase.